The sequence spans 401 residues: Beta-ketoadipyl-CoA thiolase (401 aa).

Cys-91 acts as the Acyl-thioester intermediate in catalysis. Residues His-357 and Cys-387 each act as proton acceptor in the active site.

The protein belongs to the thiolase-like superfamily. Thiolase family. In terms of assembly, homotetramer.

The enzyme catalyses succinyl-CoA + acetyl-CoA = 3-oxoadipyl-CoA + CoA. The protein operates within aromatic compound metabolism; beta-ketoadipate pathway; acetyl-CoA and succinyl-CoA from 3-oxoadipate: step 2/2. Catalyzes thiolytic cleavage of beta-ketoadipyl-CoA to succinyl-CoA and acetyl-CoA. The chain is Beta-ketoadipyl-CoA thiolase (pcaF) from Pseudomonas knackmussii (strain DSM 6978 / CCUG 54928 / LMG 23759 / B13).